Consider the following 128-residue polypeptide: uncharacterized protein (128 aa).

This is an uncharacterized protein from Caenorhabditis elegans.